A 277-amino-acid chain; its full sequence is MEYQHWLREAISQLQASESPRRDAEILLEHVTGKGRTFILAFGETQLTDEQCQQLDALLTRRRDGEPIAHLTGVREFWSLPLFVSPATLIPRPDTECLVEQALARLPEQPCRILDLGTGTGAIALALARERPDCEITAVDRMPDAVALAQRNAQHLAIKNIHILQSDWFSELAGQQFAMIVSNPPYIDEQDPHLQQGDVRFEPLTALVAADSGMADIVHIIEQSRNALVSGGFLLLEHGWQQGEAVRQAFILAGYHDVETCRDYGDNERVTLGRYYQ.

Residues 117 to 121, aspartate 140, tryptophan 168, and asparagine 183 each bind S-adenosyl-L-methionine; that span reads GTGTG. 183-186 is a substrate binding site; that stretch reads NPPY.

The protein belongs to the protein N5-glutamine methyltransferase family. PrmC subfamily.

The catalysed reaction is L-glutaminyl-[peptide chain release factor] + S-adenosyl-L-methionine = N(5)-methyl-L-glutaminyl-[peptide chain release factor] + S-adenosyl-L-homocysteine + H(+). Its function is as follows. Methylates the class 1 translation termination release factors RF1/PrfA and RF2/PrfB on the glutamine residue of the universally conserved GGQ motif. The sequence is that of Release factor glutamine methyltransferase from Shigella dysenteriae serotype 1 (strain Sd197).